The chain runs to 547 residues: Cytochrome P450 monooxygenase cpsD (547 aa).

The chain crosses the membrane as a helical span at residues 18-38 (LTGAALVVTLITSVIIVAADL). Cysteine 476 provides a ligand contact to heme. The disordered stretch occupies residues 528–547 (RRRDARRTHEALGSKLKPEE). The segment covering 534-547 (RTHEALGSKLKPEE) has biased composition (basic and acidic residues).

This sequence belongs to the cytochrome P450 family. It depends on heme as a cofactor.

The protein resides in the membrane. The catalysed reaction is campesine B + campesine C + reduced [NADPH--hemoprotein reductase] + O2 = campesine D + oxidized [NADPH--hemoprotein reductase] + 2 H2O + 2 H(+). The enzyme catalyses 2 campesine B + reduced [NADPH--hemoprotein reductase] + O2 = campesine F + oxidized [NADPH--hemoprotein reductase] + 2 H2O + H(+). It catalyses the reaction campesine C + campesine A + reduced [NADPH--hemoprotein reductase] + O2 = campesine E + oxidized [NADPH--hemoprotein reductase] + 2 H2O + 2 H(+). Its pathway is alkaloid biosynthesis. In terms of biological role, cytochrome P450 monooxygenase; part of the gene cluster that mediates the biosynthesis of campesine G, a dimeric indole piperazine alkaloid that shows good insecticidal activity Galleria mellonella. Within the pathway, cpsD acts as a dimerase that simultaneously catalyzes one C-C bond (C3-C3') and two C-N bonds (C2-N16' and C2'-N16) coupling reactions between campesines B and C to produce a heterodimer with unexpected 6/5/6/6/6/6/5/6 eight-ring scaffold called campesine D. CpsD is also able to catalyze oxidative heterocoupling od campesines A with B to produce campesine F and campesines A with C to produce campesine E. The non-canonical non-ribosomal peptide synthetase cpsA catalyzes the first steps of the pathway by producing L-tryptophanal and L-valinal from their respective amino-acids. These products condensate spontaneously to form trypyl-valyl pyrazine also known as didehydrocampesine A. The NmrA-like family domain-containing oxidoreductase cpsB is the next enzyme in cps pathway and reduces the unstable didehydrocampesine A to campesine A. The methyltransferase cpsF and the acetyltransferase cpsE both recognize N13 of piperazine ring to carry out methylation and acetylation of campesine A to produce campesine C and B, respectively. The cytochrome P450 monooxygenase cpsD then acts as a dimerase that catalyzes oxidative heterocoupling between campesine B and C to produce heterodimers with unexpected 6/5/6/6/6/6/5/6 eight-ring scaffold called campesine D. Finally,the cytochrome P450 monooxygenase cpsC is a regioselective dehydrogenase that catalyzes dehydrogenation reaction towards C2-N1 to produce campesine G. This chain is Cytochrome P450 monooxygenase cpsD, found in Aspergillus campestris (strain IBT 28561).